Reading from the N-terminus, the 758-residue chain is 5-methyltetrahydropteroyltriglutamate--homocysteine methyltransferase (758 aa).

5-methyltetrahydropteroyltri-L-glutamate is bound by residues 17-20 (RELK) and lysine 114. L-homocysteine-binding positions include 429 to 431 (IGS) and glutamate 482. L-methionine is bound by residues 429–431 (IGS) and glutamate 482. 5-methyltetrahydropteroyltri-L-glutamate is bound by residues 513–514 (RC) and tryptophan 559. Aspartate 597 serves as a coordination point for L-homocysteine. Aspartate 597 contributes to the L-methionine binding site. Glutamate 603 provides a ligand contact to 5-methyltetrahydropteroyltri-L-glutamate. Residues histidine 639, cysteine 641, and glutamate 663 each contribute to the Zn(2+) site. The active-site Proton donor is histidine 692. Cysteine 724 lines the Zn(2+) pocket.

This sequence belongs to the vitamin-B12 independent methionine synthase family. Zn(2+) serves as cofactor.

The catalysed reaction is 5-methyltetrahydropteroyltri-L-glutamate + L-homocysteine = tetrahydropteroyltri-L-glutamate + L-methionine. Its pathway is amino-acid biosynthesis; L-methionine biosynthesis via de novo pathway; L-methionine from L-homocysteine (MetE route): step 1/1. Functionally, catalyzes the transfer of a methyl group from 5-methyltetrahydrofolate to homocysteine resulting in methionine formation. This chain is 5-methyltetrahydropteroyltriglutamate--homocysteine methyltransferase, found in Buchnera aphidicola subsp. Acyrthosiphon pisum (strain APS) (Acyrthosiphon pisum symbiotic bacterium).